A 781-amino-acid polypeptide reads, in one-letter code: Isoquinoline 1-oxidoreductase subunit beta (781 aa).

In terms of assembly, heterodimer of an alpha chain and a beta chain.

The enzyme catalyses isoquinoline + A + H2O = isoquinolin-1(2H)-one + AH2. Its function is as follows. Specific towards N-containing N-heterocyclic substrates, including isoquinoline, isoquinolin-5-ol, phthalazine and quinazoline. This is Isoquinoline 1-oxidoreductase subunit beta (iorB) from Brevundimonas diminuta (Pseudomonas diminuta).